Reading from the N-terminus, the 156-residue chain is Putative HTH-type transcriptional regulator YffB (156 aa).

An HTH rrf2-type domain is found at 2–137; sequence KLSSGWEQSV…SNVSLAQVAD (136 aa).

This is Putative HTH-type transcriptional regulator YffB (yffB) from Lactococcus lactis subsp. lactis (strain IL1403) (Streptococcus lactis).